A 272-amino-acid polypeptide reads, in one-letter code: Alcohol dehydrogenase-related 31 kDa protein (272 aa).

Residue 11-34 coordinates NAD(+); it reads YVADCGGIALETSKVLMTKNIAKL. Residue S139 coordinates substrate. Y152 (proton acceptor) is an active-site residue.

Belongs to the short-chain dehydrogenases/reductases (SDR) family.

This is Alcohol dehydrogenase-related 31 kDa protein (Adhr) from Drosophila teissieri (Fruit fly).